The following is a 152-amino-acid chain: MTEPSQKNNSTQQELTNHLFPEKSSQIGQKQLQQIERQLKCLAFQNPGPQVADFNPETRQQKKKARMSKMNEYFSVKYKVMKKYDKSGRLICNDVDLCDCLEKNCLGCFYPCPKCNSNKCGPECRCNRRWVYDAIVTESGEVINTLPFSVPD.

The segment covering 1–16 (MTEPSQKNNSTQQELT) has biased composition (polar residues). Positions 1–27 (MTEPSQKNNSTQQELTNHLFPEKSSQI) are disordered.

The chain is ARL14 effector protein-like (Arl14epl) from Mus musculus (Mouse).